Here is a 258-residue protein sequence, read N- to C-terminus: Tropinone reductase-like 3 (258 aa).

19-43 serves as a coordination point for NAD(+); it reads IVTASTQGIGFAIAYRLGLEGAAVV. S150 contacts substrate. Y163 functions as the Proton acceptor in the catalytic mechanism.

Belongs to the short-chain dehydrogenases/reductases (SDR) family.

Its function is as follows. Has no tropinone reductase activity. This is Tropinone reductase-like 3 from Erythroxylum coca (Coca plant).